Reading from the N-terminus, the 623-residue chain is Chaperone protein DnaK (623 aa).

Low complexity predominate over residues 582–603; it reads QQQQAAEQAAQQQSGGQQASGS. The interval 582-623 is disordered; it reads QQQQAAEQAAQQQSGGQQASGSNPGKDPNVVDADYEVVNDKK. Residues 614–623 are compositionally biased toward acidic residues; the sequence is ADYEVVNDKK.

Belongs to the heat shock protein 70 family.

Functionally, acts as a chaperone. The polypeptide is Chaperone protein DnaK (Methanocella arvoryzae (strain DSM 22066 / NBRC 105507 / MRE50)).